A 104-amino-acid polypeptide reads, in one-letter code: L-rhamnose mutarotase (104 aa).

Substrate is bound at residue Tyr-18. His-22 serves as the catalytic Proton donor. Residues Tyr-41 and 76-77 each bind substrate; that span reads WW.

The protein belongs to the rhamnose mutarotase family. In terms of assembly, homodimer.

Its subcellular location is the cytoplasm. The enzyme catalyses alpha-L-rhamnose = beta-L-rhamnose. It participates in carbohydrate metabolism; L-rhamnose metabolism. Its function is as follows. Involved in the anomeric conversion of L-rhamnose. In Burkholderia orbicola (strain MC0-3), this protein is L-rhamnose mutarotase.